The following is a 219-amino-acid chain: uncharacterized protein (219 aa).

The interval 70–102 (VHIGDNHPEPKNESKTQPKIESKKEPTLKQEEQ) is disordered. Basic and acidic residues predominate over residues 73-101 (GDNHPEPKNESKTQPKIESKKEPTLKQEE). A coiled-coil region spans residues 96 to 120 (TLKQEEQTIQAEEEAQKIAKEETRE). Helical transmembrane passes span 126–146 (GGEI…VNML), 153–173 (IFGL…VIVL), and 192–212 (TYGV…AIFF).

It localises to the membrane. This is an uncharacterized protein from Acanthamoeba polyphaga mimivirus (APMV).